Reading from the N-terminus, the 378-residue chain is Putative monoglyceride lipase (378 aa).

The short motif at 97–101 (GHSMG) is the GXSXG element. S99 (nucleophile) is an active-site residue. Residues D219 and H249 each act as charge relay system in the active site. A compositionally biased stretch (basic and acidic residues) spans 276-292 (PSETVKSEQETAVEHPK). The interval 276 to 350 (PSETVKSEQE…TSESTTVPET (75 aa)) is disordered. The segment covering 293–305 (PTATTSAPSASPT) has biased composition (low complexity). Phosphoserine is present on S301. Residues 341 to 350 (TSESTTVPET) are compositionally biased toward polar residues.

Belongs to the AB hydrolase superfamily. Monoacylglycerol lipase family.

It localises to the lipid droplet. The protein localises to the cytoplasm. Its subcellular location is the endoplasmic reticulum. The protein resides in the mitochondrion outer membrane. The enzyme catalyses Hydrolyzes glycerol monoesters of long-chain fatty acids.. Its pathway is glycerolipid metabolism; triacylglycerol degradation. Functionally, converts monoacylglycerides (MAG) to free fatty acids and glycerol. Has a strong preference for monounsaturated monoglycerides. Required for efficient degradation of MAG, short-lived intermediates of glycerolipid metabolism which may also function as lipid signaling molecules. Controls inactivation of the signaling lipid N-palmitoylethanolamine (PEA). Involved in fatty acid ethyl ester (FAEE) catabolism. FAEEs are non-oxidative metabolites of ethanol that are transiently incorporated into lipid droplets (LDs). Their mobilization by LD-resident FAEE hydrolases facilitates a controlled metabolism of these potentially toxic lipid metabolites. This is Putative monoglyceride lipase (mgl1) from Schizosaccharomyces pombe (strain 972 / ATCC 24843) (Fission yeast).